The following is a 439-amino-acid chain: UDP-N-acetylglucosamine--N-acetylmuramyl-(pentapeptide) pyrophosphoryl-undecaprenol N-acetylglucosamine transferase (439 aa).

Residues 25–27, arginine 218, serine 248, and glutamine 362 each bind UDP-N-acetyl-alpha-D-glucosamine; that span reads TGG.

Belongs to the glycosyltransferase 28 family. MurG subfamily.

The protein resides in the cell membrane. The enzyme catalyses di-trans,octa-cis-undecaprenyl diphospho-N-acetyl-alpha-D-muramoyl-L-alanyl-D-glutamyl-meso-2,6-diaminopimeloyl-D-alanyl-D-alanine + UDP-N-acetyl-alpha-D-glucosamine = di-trans,octa-cis-undecaprenyl diphospho-[N-acetyl-alpha-D-glucosaminyl-(1-&gt;4)]-N-acetyl-alpha-D-muramoyl-L-alanyl-D-glutamyl-meso-2,6-diaminopimeloyl-D-alanyl-D-alanine + UDP + H(+). Its pathway is cell wall biogenesis; peptidoglycan biosynthesis. Functionally, cell wall formation. Catalyzes the transfer of a GlcNAc subunit on undecaprenyl-pyrophosphoryl-MurNAc-pentapeptide (lipid intermediate I) to form undecaprenyl-pyrophosphoryl-MurNAc-(pentapeptide)GlcNAc (lipid intermediate II). This is UDP-N-acetylglucosamine--N-acetylmuramyl-(pentapeptide) pyrophosphoryl-undecaprenol N-acetylglucosamine transferase from Roseiflexus sp. (strain RS-1).